Here is a 1175-residue protein sequence, read N- to C-terminus: DNA-directed RNA polymerase subunit beta (1175 aa).

Residues 1142–1175 (PMELSGSDDDEFDQAGASLGINLSRDERSDADIA) form a disordered region. A compositionally biased stretch (basic and acidic residues) spans 1165-1175 (SRDERSDADIA).

The protein belongs to the RNA polymerase beta chain family. The RNAP catalytic core consists of 2 alpha, 1 beta, 1 beta' and 1 omega subunit. When a sigma factor is associated with the core the holoenzyme is formed, which can initiate transcription.

It carries out the reaction RNA(n) + a ribonucleoside 5'-triphosphate = RNA(n+1) + diphosphate. In terms of biological role, DNA-dependent RNA polymerase catalyzes the transcription of DNA into RNA using the four ribonucleoside triphosphates as substrates. In Corynebacterium diphtheriae (strain ATCC 700971 / NCTC 13129 / Biotype gravis), this protein is DNA-directed RNA polymerase subunit beta.